Here is a 215-residue protein sequence, read N- to C-terminus: Nascent polypeptide-associated complex subunit alpha (215 aa).

Residues 1–81 (MPGEATETVP…SEKKARKAMS (81 aa)) are disordered. Polar residues predominate over residues 9–28 (VPATEQELPQPQAETGSGTE). The span at 29–42 (SDSDESVPELEEQD) shows a compositional bias: acidic residues. Phosphoserine; by ILK1 is present on Ser-43. Over residues 44–57 (TQATTQQAQLAAAA) the composition is skewed to low complexity. A required for DNA-binding region spans residues 69-80 (QSRSEKKARKAM). One can recognise an NAC-A/B domain in the interval 70–135 (SRSEKKARKA…AKIEDLSQQA (66 aa)). The segment at 93–108 (RVTIRKSKNILFVITK) is RNA/DNA-binding. Ser-132 carries the phosphoserine modification. Position 142 is an N6-acetyllysine; alternate (Lys-142). A Glycyl lysine isopeptide (Lys-Gly) (interchain with G-Cter in SUMO2); alternate cross-link involves residue Lys-142. Thr-159 carries the post-translational modification Phosphothreonine; by GSK3-beta. Phosphothreonine is present on Thr-161. 4 positions are modified to phosphoserine: Ser-166, Ser-186, Ser-191, and Ser-203. Residues 176–213 (VEVKDIELVMSQANVSRAKAVRALKNNSNDIVNAIMEL) form the UBA domain.

The protein belongs to the NAC-alpha family. As to quaternary structure, part of the nascent polypeptide-associated complex (NAC), which is a heterodimer of NACA and BTF3 (via NAC-A/B domains). NAC associates with ribosomes through the BTF3/NACB subunit and contacts the ribosomal protein L23, which is positioned near the exiting site. Both subunits can contact nascent polypeptide chains. NACA may also form homodimers, and only this form binds DNA. Interacts with TBP and JUN. Phosphorylation of Ser-43 by ILK during cell adhesion may promote nuclear localization. Phosphorylation of Thr-159 by GSK3B may promote proteasome mediated degradation.

Its subcellular location is the cytoplasm. The protein resides in the nucleus. In terms of biological role, prevents inappropriate targeting of non-secretory polypeptides to the endoplasmic reticulum (ER). Binds to nascent polypeptide chains as they emerge from the ribosome and blocks their interaction with the signal recognition particle (SRP), which normally targets nascent secretory peptides to the ER. Also reduces the inherent affinity of ribosomes for protein translocation sites in the ER membrane (M sites). May act as a specific coactivator for JUN, binding to DNA and stabilizing the interaction of JUN homodimers with target gene promoters. The chain is Nascent polypeptide-associated complex subunit alpha (NACA) from Pongo abelii (Sumatran orangutan).